The sequence spans 255 residues: F-box/SPRY domain-containing protein 1 (255 aa).

The region spanning 3–51 is the F-box domain; that stretch reads DPVAALCNYNVLEVIFSYLELEDLSHCSQVCKSWYHFLNDENSDVWRWH. One can recognise a B30.2/SPRY domain in the interval 61–253; the sequence is LKSDLLSSVS…VSMVYLGTPL (193 aa).

Belongs to the FBXO45/Fsn family. Component of an E3 ubiquitin ligase complex composed of hiw and Fsn.

Its subcellular location is the synapse. It participates in protein modification; protein ubiquitination. Functionally, required in the presynaptic motoneuron to down-regulate the levels of wnd and restrain synaptic terminal growth at the neuromuscular junction (NMJ). In Drosophila erecta (Fruit fly), this protein is F-box/SPRY domain-containing protein 1.